A 340-amino-acid polypeptide reads, in one-letter code: Phenylalanine--tRNA ligase alpha subunit (340 aa).

Glu-251 lines the Mg(2+) pocket.

This sequence belongs to the class-II aminoacyl-tRNA synthetase family. Phe-tRNA synthetase alpha subunit type 1 subfamily. In terms of assembly, tetramer of two alpha and two beta subunits. Mg(2+) is required as a cofactor.

The protein localises to the cytoplasm. It carries out the reaction tRNA(Phe) + L-phenylalanine + ATP = L-phenylalanyl-tRNA(Phe) + AMP + diphosphate + H(+). This Porphyromonas gingivalis (strain ATCC 33277 / DSM 20709 / CIP 103683 / JCM 12257 / NCTC 11834 / 2561) protein is Phenylalanine--tRNA ligase alpha subunit.